The following is a 161-amino-acid chain: Phosphopantetheine adenylyltransferase (161 aa).

A substrate-binding site is contributed by Ser-9. ATP contacts are provided by residues 9 to 10 (SF) and His-17. Residues Lys-41, Leu-73, and Arg-87 each coordinate substrate. ATP is bound by residues 88–90 (GLR), Glu-98, and 123–129 (YTFISSS).

The protein belongs to the bacterial CoaD family. As to quaternary structure, homohexamer. Mg(2+) serves as cofactor.

It localises to the cytoplasm. It carries out the reaction (R)-4'-phosphopantetheine + ATP + H(+) = 3'-dephospho-CoA + diphosphate. Its pathway is cofactor biosynthesis; coenzyme A biosynthesis; CoA from (R)-pantothenate: step 4/5. Functionally, reversibly transfers an adenylyl group from ATP to 4'-phosphopantetheine, yielding dephospho-CoA (dPCoA) and pyrophosphate. The chain is Phosphopantetheine adenylyltransferase from Syntrophomonas wolfei subsp. wolfei (strain DSM 2245B / Goettingen).